A 440-amino-acid chain; its full sequence is MKQTPDQFSVSHLLSAVESEISAGSEKGDPTERDLKVTLGEKPLWEKFKSLTNEMIVTKSGRRMFPVLKVNVSGLDPNAMYSFLLDFTAADNHRWKYVNGEWVPGGKPEPSVPSCVYIHPDSPNFGAHWMKSPVSFSKVKLTNKLNGGGQQIMLNSLHKYEPRIHIVKVGGPDNQRTLSTHTFAETQFIAVTAYQNEELTALKIKHNPFAKAFLDAKERNDTKSGHDDLTDQQPQFSQLGGWFLPGTGPICPPPNPHQFAPSLGLPSHGCDRYSTLRNHRSAPYPHPYQRSSPPTNYGHDTAASLPMMPTHDNWSGLPVSTHNMLSMSAMPHTTTSTHAQYPNLWSVSNNNLTPTTHAQTHMSGTMGTGLPHQFLRTTAPAPYHSIPTCTVPTTASSSPVYHDSHEVSSTDSGYGHSTTPPAPQTRITSNNWSPMTMPSM.

A DNA-binding region (T-box) is located at residues 44–215 (LWEKFKSLTN…HNPFAKAFLD (172 aa)). Disordered stretches follow at residues 282–303 (APYPHPYQRSSPPTNYGHDTAA) and 393–440 (TTAS…MPSM). The span at 409–440 (STDSGYGHSTTPPAPQTRITSNNWSPMTMPSM) shows a compositional bias: polar residues.

As to expression, mesoderm and notochord.

It is found in the nucleus. Its function is as follows. Involved in the transcriptional regulation of genes required for mesoderm formation and differentiation. The protein is T-box transcription factor T homolog 2 of Branchiostoma floridae (Florida lancelet).